Reading from the N-terminus, the 288-residue chain is Probable ketoamine kinase PM0587 (288 aa).

Position 92-94 (92-94 (EAL)) interacts with ATP.

Belongs to the fructosamine kinase family.

Ketoamine kinase that phosphorylates ketoamines on the third carbon of the sugar moiety to generate ketoamine 3-phosphate. The sequence is that of Probable ketoamine kinase PM0587 from Pasteurella multocida (strain Pm70).